The following is a 191-amino-acid chain: NAD(P)H-quinone oxidoreductase subunit L, chloroplastic (191 aa).

Residues 1 to 46 (MSRCGSLGLYAPNALPSLSLKPRSVKSPFCITSHTKPNDTLLHNVN) constitute a chloroplast transit peptide. Helical transmembrane passes span 61-81 (TILAAQLGAVLATIDHPALAI), 93-113 (VVLDIGIISVWYFLVMPPIIM), and 129-149 (YLQFMFVFMFFPGLLLWAPFL).

It belongs to the NDH complex subunit L family. Part of the chloroplast NDH complex, composed of a mixture of chloroplast and nucleus encoded subunits. Component of the NDH subcomplex A, at least composed of ndhH, ndhI, ndhJ, ndhK, ndhL, ndhM, ndhN and ndhO.

Its subcellular location is the plastid. The protein resides in the chloroplast thylakoid membrane. It catalyses the reaction a plastoquinone + NADH + (n+1) H(+)(in) = a plastoquinol + NAD(+) + n H(+)(out). It carries out the reaction a plastoquinone + NADPH + (n+1) H(+)(in) = a plastoquinol + NADP(+) + n H(+)(out). Functionally, NDH shuttles electrons from NAD(P)H:plastoquinone, via FMN and iron-sulfur (Fe-S) centers, to quinones in the photosynthetic chain and possibly in a chloroplast respiratory chain. The immediate electron acceptor for the enzyme in this species is believed to be plastoquinone. Couples the redox reaction to proton translocation, and thus conserves the redox energy in a proton gradient. In Arabidopsis thaliana (Mouse-ear cress), this protein is NAD(P)H-quinone oxidoreductase subunit L, chloroplastic.